A 605-amino-acid chain; its full sequence is Zinc metalloproteinase-disintegrin-like BfMP (605 aa).

The first 11 residues, 1-11 (MLVVFPYQGSS), serve as a signal peptide directing secretion. A propeptide spanning residues 12 to 179 (IILESGNVND…WESDEPFKNT (168 aa)) is cleaved from the precursor. 2 N-linked (GlcNAc...) asparagine glycosylation sites follow: N178 and N215. Positions 196-392 (KYIEFYVAVD…DRPQCILNKP (197 aa)) constitute a Peptidase M12B domain. 17 disulfide bridges follow: C307–C387, C347–C371, C350–C355, C403–C432, C414–C427, C416–C422, C426–C449, C440–C446, C445–C471, C458–C478, C465–C497, C490–C502, C509–C559, C524–C567, C537–C547, C554–C593, and C587–C598. Residue H332 coordinates Zn(2+). The active site involves E333. H336 and H342 together coordinate Zn(2+). Residues 400 to 486 (PAICGNYFVE…ECPTDIFRRN (87 aa)) form the Disintegrin domain. The short motif at 464 to 466 (DCD) is the D/ECD-tripeptide element.

This sequence belongs to the venom metalloproteinase (M12B) family. P-III subfamily. P-IIIa sub-subfamily. As to quaternary structure, monomer. It depends on Zn(2+) as a cofactor. In terms of tissue distribution, expressed by the venom gland.

The protein localises to the secreted. In terms of biological role, snake venom zinc metalloproteinase that inhibits platelet aggregation and degrades fibrinogen. In Bungarus fasciatus (Banded krait), this protein is Zinc metalloproteinase-disintegrin-like BfMP.